A 159-amino-acid polypeptide reads, in one-letter code: Ribosomal RNA large subunit methyltransferase H (159 aa).

Residues L76, G108, and 127-132 (LSKMTF) each bind S-adenosyl-L-methionine.

This sequence belongs to the RNA methyltransferase RlmH family. As to quaternary structure, homodimer.

The protein localises to the cytoplasm. It carries out the reaction pseudouridine(1915) in 23S rRNA + S-adenosyl-L-methionine = N(3)-methylpseudouridine(1915) in 23S rRNA + S-adenosyl-L-homocysteine + H(+). Functionally, specifically methylates the pseudouridine at position 1915 (m3Psi1915) in 23S rRNA. This Ureaplasma urealyticum serovar 10 (strain ATCC 33699 / Western) protein is Ribosomal RNA large subunit methyltransferase H.